Reading from the N-terminus, the 445-residue chain is Transcription termination factor MTERF15, mitochondrial (445 aa).

Residues 1 to 25 (MASKLKTFINLRDYPITLFNQIRSL) constitute a mitochondrion transit peptide.

It belongs to the mTERF family.

It localises to the mitochondrion. Functionally, transcription termination factor required for mitochondrial NAD2 intron 3 splicing and normal membrane respiratory chain Complex I activity. Essential for normal plant growth and development. Binds to RNA but not to double-stranded DNA. The protein is Transcription termination factor MTERF15, mitochondrial of Arabidopsis thaliana (Mouse-ear cress).